Here is a 216-residue protein sequence, read N- to C-terminus: Probable transaldolase (216 aa).

The active-site Schiff-base intermediate with substrate is K83.

Belongs to the transaldolase family. Type 3B subfamily.

Its subcellular location is the cytoplasm. The catalysed reaction is D-sedoheptulose 7-phosphate + D-glyceraldehyde 3-phosphate = D-erythrose 4-phosphate + beta-D-fructose 6-phosphate. It participates in carbohydrate degradation; pentose phosphate pathway; D-glyceraldehyde 3-phosphate and beta-D-fructose 6-phosphate from D-ribose 5-phosphate and D-xylulose 5-phosphate (non-oxidative stage): step 2/3. Functionally, transaldolase is important for the balance of metabolites in the pentose-phosphate pathway. This Desulforamulus reducens (strain ATCC BAA-1160 / DSM 100696 / MI-1) (Desulfotomaculum reducens) protein is Probable transaldolase.